A 332-amino-acid chain; its full sequence is MKVAVLGAGAWGTALAGHLAARHDTLLWARDAALIAGLQARHENSRYLDGIALPDALRYDADLGAALAHGAADDALCVIAAPVAGLRTLCHAMRDAGCVPAHVVWVCKGFEADTHLLPHQVIAAELPEQQSNGVLSGPSFAREVGQSLPVALTVASVSAECRERTLAAFHHGAMRIYTGDDVVGVEVGGAVKNVLAIATGISDGLGLGLNARAALITRGLAEMSRLGVVLGGRAETFTGLTGLGDLILTATGDLSRNRTVGLQLAAGRTLNDILGALGHVAEGVRCAQAVLALARAQSIDMPITQAVCGVLFDGIAPRDAVSGLLRRDARAE.

NADPH is bound by residues tryptophan 11, arginine 30, and lysine 108. The sn-glycerol 3-phosphate site is built by lysine 108, glycine 137, and serine 139. Position 141 (alanine 141) interacts with NADPH. 5 residues coordinate sn-glycerol 3-phosphate: lysine 192, aspartate 245, serine 255, arginine 256, and asparagine 257. Residue lysine 192 is the Proton acceptor of the active site. Arginine 256 lines the NADPH pocket. Residues valine 280 and glutamate 282 each contribute to the NADPH site.

Belongs to the NAD-dependent glycerol-3-phosphate dehydrogenase family.

The protein localises to the cytoplasm. The enzyme catalyses sn-glycerol 3-phosphate + NAD(+) = dihydroxyacetone phosphate + NADH + H(+). It catalyses the reaction sn-glycerol 3-phosphate + NADP(+) = dihydroxyacetone phosphate + NADPH + H(+). It functions in the pathway membrane lipid metabolism; glycerophospholipid metabolism. Functionally, catalyzes the reduction of the glycolytic intermediate dihydroxyacetone phosphate (DHAP) to sn-glycerol 3-phosphate (G3P), the key precursor for phospholipid synthesis. The protein is Glycerol-3-phosphate dehydrogenase [NAD(P)+] of Burkholderia orbicola (strain AU 1054).